The following is a 52-amino-acid chain: Gastrin/cholecystokinin-like peptide (52 aa).

The protein belongs to the gastrin/cholecystokinin family.

Its subcellular location is the secreted. In terms of biological role, may control digestion processes. In Trachemys scripta (Red-eared slider turtle), this protein is Gastrin/cholecystokinin-like peptide.